The following is an 853-amino-acid chain: MICAL-like protein 1 (853 aa).

Positions 2 to 108 (AGPRGALLAW…YVSQYYNHFA (107 aa)) constitute a Calponin-homology (CH) domain. Disordered regions lie at residues 118–162 (PRKG…TPSS) and 224–659 (SGRS…FPLI). Over residues 145–162 (ECSSGSLSKQGSHRTPSS) the composition is skewed to polar residues. An LIM zinc-binding domain is found at 162-224 (STCAACQQHV…AEHCARLGPS (63 aa)). Phosphoserine is present on residues Ser292 and Ser306. Phosphothreonine occurs at positions 312 and 315. Basic and acidic residues predominate over residues 355 to 366 (LSERTPAPRKDP). Over residues 381–394 (APLPPSSSPGPPPG) the composition is skewed to pro residues. Residue Ser388 is modified to Phosphoserine. Residues 419-421 (NPF) carry the NPF1 motif. Residues 429-445 (PAAPSPAPGPAPTPPES) are compositionally biased toward pro residues. Phosphothreonine is present on residues Thr457 and Thr459. 4 positions are modified to phosphoserine: Ser460, Ser461, Ser474, and Ser476. Composition is skewed to low complexity over residues 495–515 (PSPA…APSE) and 541–553 (SASL…LSSS). Phosphoserine occurs at positions 568 and 611. Residues 607–618 (PGTSSPQLQVKS) show a composition bias toward polar residues. The NPF2 signature appears at 623 to 625 (NPF). The interval 642–853 (KGSKPARPPA…TKSKCPGDRS (212 aa)) is mediates the interaction with RAB13 and RAB35 and intramolecular interaction with the CH domain. One can recognise a bMERB domain in the interval 661–808 (RKVQSDQYIP…EEEEDKMLEA (148 aa)). Residues 671–701 (EEDIHGEIDTIERQLDALEHRGVLLEEKLRG) adopt a coiled-coil conformation. Residues 690 to 853 (HRGVLLEEKL…TKSKCPGDRS (164 aa)) are necessary and sufficient to associate with tubular recycling endosome membranes, mediate phosphatidic acid-binding and membrane tubulation. Ser730 carries the phosphoserine modification. Positions 791 to 820 (CLDEDRQREEEEDKMLEAMIKKKEFQKETE) form a coiled coil.

In terms of assembly, homooligomer. Interacts (via NPF1 motif) with EHD1 (via EH domain); the interaction is direct and probably recruits EHD1 to membranes. Interacts with EHD3 (via EH domain). Interacts with RAB35 (GTP-bound form); the interaction is direct and probably recruits MICALL1 to membranes. Interacts with ACAP2; the interaction is indirect through RAB35. Interacts with RAB8A (GTP-bound form); regulates RAB8A association with recycling endosomes. Interacts with RAB13 (GTP-bound form). Interacts with ARF6 (GTP-bound form). Interacts with PACSIN2 (via the SH3 domain). Interacts with DPYSL2.

The protein localises to the recycling endosome membrane. It localises to the late endosome membrane. The protein resides in the cell projection. It is found in the cilium membrane. Its subcellular location is the cytoplasm. The protein localises to the cytoskeleton. It localises to the microtubule organizing center. The protein resides in the centrosome. It is found in the centriole. Its function is as follows. Lipid-binding protein with higher affinity for phosphatidic acid, a lipid enriched in recycling endosome membranes. On endosome membranes, acts as a downstream effector of Rab proteins recruiting cytosolic proteins to regulate membrane tubulation. Involved in a late step of receptor-mediated endocytosis regulating for instance endocytosed-EGF receptor trafficking. Alternatively, regulates slow endocytic recycling of endocytosed proteins back to the plasma membrane. Also involved in cargo protein delivery to the plasma membrane. Plays a role in ciliogenesis coordination, recruits EHD1 to primary cilium where it is anchored to the centriole through interaction with tubulins. May indirectly play a role in neurite outgrowth. The sequence is that of MICAL-like protein 1 (MICALL1) from Bos taurus (Bovine).